The chain runs to 150 residues: 1,4-dihydroxy-2-naphthoyl-CoA hydrolase (150 aa).

The active site involves Asp-22.

Belongs to the 4-hydroxybenzoyl-CoA thioesterase family. DHNA-CoA hydrolase subfamily.

The enzyme catalyses 1,4-dihydroxy-2-naphthoyl-CoA + H2O = 1,4-dihydroxy-2-naphthoate + CoA + H(+). It participates in cofactor biosynthesis; phylloquinone biosynthesis. It functions in the pathway quinol/quinone metabolism; 1,4-dihydroxy-2-naphthoate biosynthesis; 1,4-dihydroxy-2-naphthoate from chorismate: step 7/7. Catalyzes the hydrolysis of 1,4-dihydroxy-2-naphthoyl-CoA (DHNA-CoA) to 1,4-dihydroxy-2-naphthoate (DHNA), a reaction involved in phylloquinone (vitamin K1) biosynthesis. This Prochlorococcus marinus (strain NATL1A) protein is 1,4-dihydroxy-2-naphthoyl-CoA hydrolase.